Reading from the N-terminus, the 626-residue chain is Chaperone protein HtpG (626 aa).

Positions 1-339 (MSTNQETRGF…SNDLPLNVSR (339 aa)) are a; substrate-binding. The interval 340–555 (EILQDNKVTA…NDQMTTQMAK (216 aa)) is b. Residues 556–626 (LFAAAGQPVP…FIKRVNNLLG (71 aa)) are c.

It belongs to the heat shock protein 90 family. In terms of assembly, homodimer.

The protein localises to the cytoplasm. Its function is as follows. Molecular chaperone. Has ATPase activity. This chain is Chaperone protein HtpG, found in Histophilus somni (strain 2336) (Haemophilus somnus).